Here is a 345-residue protein sequence, read N- to C-terminus: Biotin synthase (345 aa).

The Radical SAM core domain maps to 66 to 293 (NTVQLSTLLS…RAMVRLSAGR (228 aa)). [4Fe-4S] cluster-binding residues include Cys-81, Cys-85, and Cys-88. Cys-125, Cys-156, Cys-216, and Arg-288 together coordinate [2Fe-2S] cluster.

Belongs to the radical SAM superfamily. Biotin synthase family. As to quaternary structure, homodimer. The cofactor is [4Fe-4S] cluster. [2Fe-2S] cluster is required as a cofactor.

It catalyses the reaction (4R,5S)-dethiobiotin + (sulfur carrier)-SH + 2 reduced [2Fe-2S]-[ferredoxin] + 2 S-adenosyl-L-methionine = (sulfur carrier)-H + biotin + 2 5'-deoxyadenosine + 2 L-methionine + 2 oxidized [2Fe-2S]-[ferredoxin]. Its pathway is cofactor biosynthesis; biotin biosynthesis; biotin from 7,8-diaminononanoate: step 2/2. In terms of biological role, catalyzes the conversion of dethiobiotin (DTB) to biotin by the insertion of a sulfur atom into dethiobiotin via a radical-based mechanism. This chain is Biotin synthase, found in Cupriavidus metallidurans (strain ATCC 43123 / DSM 2839 / NBRC 102507 / CH34) (Ralstonia metallidurans).